Here is a 153-residue protein sequence, read N- to C-terminus: Lipoprotein signal peptidase (153 aa).

Transmembrane regions (helical) follow at residues 61–81 (YFFV…LVKN) and 85–105 (SLWL…NFID). Active-site residues include Asp-114 and Asp-130. A helical transmembrane segment spans residues 125 to 145 (IFNVADSYLTVGVLLLILILW).

This sequence belongs to the peptidase A8 family.

Its subcellular location is the cell membrane. It carries out the reaction Release of signal peptides from bacterial membrane prolipoproteins. Hydrolyzes -Xaa-Yaa-Zaa-|-(S,diacylglyceryl)Cys-, in which Xaa is hydrophobic (preferably Leu), and Yaa (Ala or Ser) and Zaa (Gly or Ala) have small, neutral side chains.. It functions in the pathway protein modification; lipoprotein biosynthesis (signal peptide cleavage). In terms of biological role, this protein specifically catalyzes the removal of signal peptides from prolipoproteins. The chain is Lipoprotein signal peptidase from Streptococcus thermophilus (strain CNRZ 1066).